We begin with the raw amino-acid sequence, 1022 residues long: D-2-hydroxyglutarate dehydrogenase (1022 aa).

The 234-residue stretch at 53–286 folds into the FAD-binding PCMH-type domain; sequence YQLLPDAVLF…SEARLDITPL (234 aa). Residues Arg-407 and His-505 each coordinate (R)-2-hydroxyglutarate. Positions 667 to 700 constitute a 4Fe-4S ferredoxin-type domain; it reads FSHEVKEAMSGCLACKACSTQCPIKIDVPAFRSR. Residues Cys-678, Cys-681, Cys-684, and Cys-688 each contribute to the [4Fe-4S] cluster site.

This sequence in the N-terminal section; belongs to the FAD-binding oxidoreductase/transferase type 4 family. In terms of assembly, homotetramer. [4Fe-4S] cluster serves as cofactor. Requires FAD as cofactor.

The catalysed reaction is (R)-2-hydroxyglutarate + A = 2-oxoglutarate + AH2. Activity is completely inhibited by the addition of 0.5 mM Mn(2+), Ni(2+), or Co(2+) and partially inhibited by 0.5 mM Zn(2+). Its function is as follows. Catalyzes the oxidation of D-2-hydroxyglutarate (D-2-HGA) to 2-oxoglutarate. Appears to be the only D2HGDH in P.ananatis, providing the way to recycle D-2-HGA produced during L-serine synthesis by SerA, by converting it back to 2-oxoglutarate. Is involved in the utilization of D-2-HGA, that can support the growth of P.ananatis as a sole carbon source, although it barely serves as a good substrate. The physiological molecule that functions as the primary electron acceptor during D-2-HGA oxidation by YdiJ in P.ananatis is unknown. Shows strict substrate specificity towards D-2-HGA, since it has no detectable activity on L-2-hydroxyglutarate, L-malate, D-malate, L-lactate, D-lactate, L-tartrate, D-tartrate, L-glycerate, D-glycerate, glutarate, or pyruvate. The polypeptide is D-2-hydroxyglutarate dehydrogenase (Pantoea ananatis (strain AJ13355)).